The primary structure comprises 136 residues: SPbeta prophage-derived uncharacterized protein YonI (136 aa).

The protein is SPbeta prophage-derived uncharacterized protein YonI (yonI) of Bacillus subtilis (strain 168).